The primary structure comprises 229 residues: 3-dehydroquinate dehydratase (229 aa).

Residues E29–R31 and R56 contribute to the 3-dehydroquinate site. The active-site Proton donor/acceptor is H120. The active-site Schiff-base intermediate with substrate is K146. The 3-dehydroquinate site is built by R187, T208, and Q212.

This sequence belongs to the type-I 3-dehydroquinase family. Homodimer.

It carries out the reaction 3-dehydroquinate = 3-dehydroshikimate + H2O. Its pathway is metabolic intermediate biosynthesis; chorismate biosynthesis; chorismate from D-erythrose 4-phosphate and phosphoenolpyruvate: step 3/7. Functionally, involved in the third step of the chorismate pathway, which leads to the biosynthesis of aromatic amino acids. Catalyzes the cis-dehydration of 3-dehydroquinate (DHQ) and introduces the first double bond of the aromatic ring to yield 3-dehydroshikimate. The polypeptide is 3-dehydroquinate dehydratase (Haloarcula marismortui (strain ATCC 43049 / DSM 3752 / JCM 8966 / VKM B-1809) (Halobacterium marismortui)).